A 108-amino-acid chain; its full sequence is UPF0145 protein MADE_1007770 (108 aa).

The protein belongs to the UPF0145 family.

The chain is UPF0145 protein MADE_1007770 from Alteromonas mediterranea (strain DSM 17117 / CIP 110805 / LMG 28347 / Deep ecotype).